Consider the following 726-residue polypeptide: MSPAPDAAPAPASISLFDLSADAPVFQGLSLVSHAPGEALARAPRTSCSGSGERESPERKLLQGPMDISEKLFCSTCDQTFQNHQEQREHYKLDWHRFNLKQRLKDKPLLSALDFEKQSSTGDLSSISGSEDSDSASEEDLQTLDRERATFEKLSRPPGFYPHRVLFQNAQGQFLYAYRCVLGPHQDPPEEAELLLQNLQSRGPRDCVVLMAAAGHFAGAIFQGREVVTHKTFHRYTVRAKRGTAQGLRDARGGPSHSAGANLRRYNEATLYKDVRDLLAGPSWAKALEEAGTILLRAPRSGRSLFFGGKGAPLQRGDPRLWDIPLATRRPTFQELQRVLHKLTTLHVYEEDPREAVRLHSPQTHWKTVREERKKPTEEEIRKICRDEKEALGQNEESPKQGSGSEGEDGFQVELELVELTVGTLDLCESEVLPKRRRRKRNKKEKSRDQEAGAHRTLLQQTQEEEPSTQSSQAVAAPLGPLLDEAKAPGQPELWNALLAACRAGDVGVLKLQLAPSPADPRVLSLLSAPLGSGGFTLLHAAAAAGRGSVVRLLLEAGADPTVQDSRARPPYTVAADKSTRNEFRRFMEKNPDAYDYNKAQVPGPLTPEMEARQATRKREQKAARRQREEQQQRQQEQEEREREEQRRFAALSDREKRALAAERRLAAQLGAPTSPIPDSAIVNTRRCWSCGASLQGLTPFHYLDFSFCSTRCLQDHRRQAGRPSS.

The tract at residues 40–61 (LARAPRTSCSGSGERESPERKL) is disordered. Residues 52-61 (GERESPERKL) show a composition bias toward basic and acidic residues. A C2H2-type zinc finger spans residues 72-96 (LFCSTCDQTFQNHQEQREHYKLDWH). Residues 120 to 130 (STGDLSSISGS) show a composition bias toward low complexity. The segment at 120–141 (STGDLSSISGSEDSDSASEEDL) is disordered. A compositionally biased stretch (acidic residues) spans 131-141 (EDSDSASEEDL). The 144-residue stretch at 203–346 (GPRDCVVLMA…QRVLHKLTTL (144 aa)) folds into the VLRF1 domain. Residue Q246 is part of the active site. 3 positions are modified to phosphoserine: S258, S361, and S398. 2 disordered regions span residues 387 to 409 (DEKE…EGED) and 436 to 474 (RRRR…SSQA). Positions 436–445 (RRRRKRNKKE) are enriched in basic residues. A compositionally biased stretch (low complexity) spans 457 to 473 (TLLQQTQEEEPSTQSSQ). The ANK 1 repeat unit spans residues 493-526 (ELWNALLAACRAGDVGVLKLQLAPSPADPRVLSL). At S533 the chain carries Phosphoserine. One copy of the ANK 2 repeat lies at 534–563 (GGFTLLHAAAAAGRGSVVRLLLEAGADPTV). The disordered stretch occupies residues 588 to 656 (MEKNPDAYDY…RRFAALSDRE (69 aa)). T607 carries the phosphothreonine modification. Residues 609–659 (EMEARQATRKREQKAARRQREEQQQRQQEQEEREREEQRRFAALSDREKRA) adopt a coiled-coil conformation. Basic and acidic residues predominate over residues 610-656 (MEARQATRKREQKAARRQREEQQQRQQEQEEREREEQRRFAALSDRE). The segment at 654-666 (DREKRALAAERRL) is VCP/p97-interacting motif (VIM). Residues S675 and S680 each carry the phosphoserine modification.

The protein belongs to the ANKZF1/VMS1 family. As to quaternary structure, interacts (via VIM motif) with VCP.

Its subcellular location is the cytoplasm. Functionally, endonuclease that cleaves polypeptidyl-tRNAs downstream of the ribosome-associated quality control (RQC) pathway to release incompletely synthesized polypeptides for degradation. The RQC pathway disassembles aberrantly stalled translation complexes to recycle or degrade the constituent parts. ANKZF1 acts downstream disassembly of stalled ribosomes and specifically cleaves off the terminal 3'-CCA nucleotides universal to all tRNAs from polypeptidyl-tRNAs, releasing (1) ubiquitinated polypeptides from 60S ribosomal subunit for degradation and (2) cleaved tRNAs. ANKZF1-cleaved tRNAs are then repaired and recycled by ELAC1 and TRNT1. Also plays a role in the cellular response to hydrogen peroxide and in the maintenance of mitochondrial integrity under conditions of cellular stress. In Homo sapiens (Human), this protein is tRNA endonuclease ANKZF1.